A 192-amino-acid polypeptide reads, in one-letter code: Ribosome hibernation promotion factor (192 aa).

A disordered region spans residues 95–129 (RVNRKHKTHGEPEAFVAEVQEAPPENVDDVNAEPT). A compositionally biased stretch (acidic residues) spans 120-129 (NVDDVNAEPT).

This sequence belongs to the HPF/YfiA ribosome-associated protein family. Long HPF subfamily. As to quaternary structure, interacts with 100S ribosomes.

It localises to the cytoplasm. In terms of biological role, required for dimerization of active 70S ribosomes into 100S ribosomes in stationary phase; 100S ribosomes are translationally inactive and sometimes present during exponential growth. The chain is Ribosome hibernation promotion factor from Staphylococcus haemolyticus (strain JCSC1435).